Consider the following 498-residue polypeptide: Glycerol kinase 1 (498 aa).

Thr12 is an ADP binding site. Positions 12, 13, and 14 each coordinate ATP. Residue Thr12 participates in sn-glycerol 3-phosphate binding. ADP is bound at residue Arg16. Sn-glycerol 3-phosphate-binding residues include Arg82, Glu83, Tyr134, and Asp243. Residues Arg82, Glu83, Tyr134, Asp243, and Gln244 each coordinate glycerol. Positions 265 and 308 each coordinate ADP. Positions 265, 308, 312, and 409 each coordinate ATP. 2 residues coordinate ADP: Gly409 and Asn413.

This sequence belongs to the FGGY kinase family. As to quaternary structure, homotetramer and homodimer (in equilibrium).

The enzyme catalyses glycerol + ATP = sn-glycerol 3-phosphate + ADP + H(+). It functions in the pathway polyol metabolism; glycerol degradation via glycerol kinase pathway; sn-glycerol 3-phosphate from glycerol: step 1/1. Activated by phosphorylation and inhibited by fructose 1,6-bisphosphate (FBP). Its function is as follows. Key enzyme in the regulation of glycerol uptake and metabolism. Catalyzes the phosphorylation of glycerol to yield sn-glycerol 3-phosphate. This is Glycerol kinase 1 from Clostridium tetani (strain Massachusetts / E88).